Here is a 737-residue protein sequence, read N- to C-terminus: 1,4-alpha-glucan branching enzyme GlgB (737 aa).

Asp-399 (nucleophile) is an active-site residue. Residue Glu-452 is the Proton donor of the active site.

The protein belongs to the glycosyl hydrolase 13 family. GlgB subfamily. Monomer.

The enzyme catalyses Transfers a segment of a (1-&gt;4)-alpha-D-glucan chain to a primary hydroxy group in a similar glucan chain.. It functions in the pathway glycan biosynthesis; glycogen biosynthesis. Functionally, catalyzes the formation of the alpha-1,6-glucosidic linkages in glycogen by scission of a 1,4-alpha-linked oligosaccharide from growing alpha-1,4-glucan chains and the subsequent attachment of the oligosaccharide to the alpha-1,6 position. This Chlamydia muridarum (strain MoPn / Nigg) protein is 1,4-alpha-glucan branching enzyme GlgB.